The following is a 74-amino-acid chain: U5-theraphotoxin-Cg1a (74 aa).

Residues 1-19 (MNATIFALLLLLNLAMYNA) form the signal peptide. The propeptide occupies 20 to 39 (AEQSSETDMDDTLLIPENYR). 3 cysteine pairs are disulfide-bonded: Cys42-Cys56, Cys49-Cys61, and Cys55-Cys71.

Belongs to the neurotoxin 36 family. 01 subfamily. In terms of tissue distribution, expressed by the venom gland.

The protein resides in the secreted. Probable ion channel inhibitor. The sequence is that of U5-theraphotoxin-Cg1a from Chilobrachys guangxiensis (Chinese earth tiger tarantula).